We begin with the raw amino-acid sequence, 121 residues long: Large ribosomal subunit protein bL12 (121 aa).

This sequence belongs to the bacterial ribosomal protein bL12 family. Homodimer. Part of the ribosomal stalk of the 50S ribosomal subunit. Forms a multimeric L10(L12)X complex, where L10 forms an elongated spine to which 2 to 4 L12 dimers bind in a sequential fashion. Binds GTP-bound translation factors.

In terms of biological role, forms part of the ribosomal stalk which helps the ribosome interact with GTP-bound translation factors. Is thus essential for accurate translation. In Lachnospira eligens (strain ATCC 27750 / DSM 3376 / VPI C15-48 / C15-B4) (Eubacterium eligens), this protein is Large ribosomal subunit protein bL12.